The following is a 43-amino-acid chain: Myotoxin-2 (43 aa).

3 disulfides stabilise this stretch: Cys4–Cys36, Cys11–Cys30, and Cys18–Cys37.

Belongs to the crotamine-myotoxin family. Monomer. In terms of tissue distribution, expressed by the venom gland.

Its subcellular location is the secreted. Cationic peptide that possesses multiple functions. It acts as a cell-penetrating peptide (CPP), and as a potent voltage-gated potassium channel (Kv) inhibitor. It exhibits antimicrobial activities, hind limb paralysis, and severe muscle necrosis by a non-enzymatic mechanism. The protein is Myotoxin-2 of Crotalus concolor (Midget faded rattlesnake).